The sequence spans 60 residues: Large ribosomal subunit protein bL32 (60 aa).

The protein belongs to the bacterial ribosomal protein bL32 family.

This is Large ribosomal subunit protein bL32 (rpmF) from Borreliella burgdorferi (strain ATCC 35210 / DSM 4680 / CIP 102532 / B31) (Borrelia burgdorferi).